The chain runs to 423 residues: Mannose-6-phosphate isomerase (423 aa).

Ala2 carries the post-translational modification N-acetylalanine. 2 positions are modified to phosphoserine: Ser102 and Ser108. Positions 110, 112, 137, and 276 each coordinate Zn(2+). Arg295 is an active-site residue.

The protein belongs to the mannose-6-phosphate isomerase type 1 family. It depends on Zn(2+) as a cofactor.

Its subcellular location is the cytoplasm. The catalysed reaction is D-mannose 6-phosphate = D-fructose 6-phosphate. It functions in the pathway nucleotide-sugar biosynthesis; GDP-alpha-D-mannose biosynthesis; alpha-D-mannose 1-phosphate from D-fructose 6-phosphate: step 1/2. Its function is as follows. Isomerase that catalyzes the interconversion of fructose-6-P and mannose-6-P and has a critical role in the supply of D-mannose derivatives required for many eukaryotic glycosylation reactions. This is Mannose-6-phosphate isomerase (MPI) from Macaca fascicularis (Crab-eating macaque).